Consider the following 97-residue polypeptide: MDFSQLGGLLDGMKKEFSQLEEKNKDTIHTSKSGGGMVSVSFNGMGELVDLQIDDSLLEDKEAMQIYLMSALNDGYKAVEENRKNLAFNMLGNFAKL.

Belongs to the YbaB/EbfC family. As to quaternary structure, homodimer.

Its subcellular location is the cytoplasm. It is found in the nucleoid. Binds to DNA and alters its conformation. May be involved in regulation of gene expression, nucleoid organization and DNA protection. The chain is Nucleoid-associated protein HPP12_0031 from Helicobacter pylori (strain P12).